A 38-amino-acid chain; its full sequence is Large ribosomal subunit protein bL36 (38 aa).

It belongs to the bacterial ribosomal protein bL36 family.

The chain is Large ribosomal subunit protein bL36 from Buchnera aphidicola subsp. Schizaphis graminum (strain Sg).